We begin with the raw amino-acid sequence, 82 residues long: Beta-defensin 113 (82 aa).

The signal sequence occupies residues 1–16; sequence MKILCIFLTFFFTVSC. Disulfide bonds link C35–C61, C42–C56, and C46–C62.

It belongs to the beta-defensin family.

The protein localises to the secreted. Functionally, has antibacterial activity. The polypeptide is Beta-defensin 113 (DEFB113) (Pan troglodytes (Chimpanzee)).